Consider the following 405-residue polypeptide: S-adenosylmethionine synthase (405 aa).

His-22 is a binding site for ATP. Asp-24 lines the Mg(2+) pocket. Glu-50 is a K(+) binding site. L-methionine is bound by residues Glu-63 and Gln-107. Residues 107 to 117 (QSPDIAQGVNR) are flexible loop. ATP-binding positions include 184–186 (DGK), 250–251 (RF), Asp-259, 265–266 (RK), Ala-282, and Lys-286. Asp-259 contributes to the L-methionine binding site. Lys-290 lines the L-methionine pocket.

Belongs to the AdoMet synthase family. Homotetramer; dimer of dimers. It depends on Mg(2+) as a cofactor. K(+) is required as a cofactor.

The protein resides in the cytoplasm. It catalyses the reaction L-methionine + ATP + H2O = S-adenosyl-L-methionine + phosphate + diphosphate. It participates in amino-acid biosynthesis; S-adenosyl-L-methionine biosynthesis; S-adenosyl-L-methionine from L-methionine: step 1/1. Functionally, catalyzes the formation of S-adenosylmethionine (AdoMet) from methionine and ATP. The overall synthetic reaction is composed of two sequential steps, AdoMet formation and the subsequent tripolyphosphate hydrolysis which occurs prior to release of AdoMet from the enzyme. The protein is S-adenosylmethionine synthase of Roseiflexus castenholzii (strain DSM 13941 / HLO8).